The chain runs to 539 residues: CTP synthase (539 aa).

An amidoligase domain region spans residues 1–268 (MSFKSIFLTG…SDFLLNKLGF (268 aa)). Ser14 lines the CTP pocket. UTP is bound at residue Ser14. An ATP-binding site is contributed by 15-20 (SLGKGL). Tyr55 lines the L-glutamine pocket. Residue Asp72 participates in ATP binding. The Mg(2+) site is built by Asp72 and Glu142. CTP-binding positions include 149-151 (DIE), 188-193 (KTKPTQ), and Lys224. Residues 188–193 (KTKPTQ) and Lys224 each bind UTP. The region spanning 294–532 (RIGLVGKYLE…IRAAKAYSLE (239 aa)) is the Glutamine amidotransferase type-1 domain. L-glutamine is bound at residue Gly353. Cys380 functions as the Nucleophile; for glutamine hydrolysis in the catalytic mechanism. Residues 381–384 (LGMQ), Glu404, and Arg460 contribute to the L-glutamine site. Catalysis depends on residues His505 and Glu507.

This sequence belongs to the CTP synthase family. Homotetramer.

It catalyses the reaction UTP + L-glutamine + ATP + H2O = CTP + L-glutamate + ADP + phosphate + 2 H(+). The catalysed reaction is L-glutamine + H2O = L-glutamate + NH4(+). It carries out the reaction UTP + NH4(+) + ATP = CTP + ADP + phosphate + 2 H(+). Its pathway is pyrimidine metabolism; CTP biosynthesis via de novo pathway; CTP from UDP: step 2/2. Its activity is regulated as follows. Allosterically activated by GTP, when glutamine is the substrate; GTP has no effect on the reaction when ammonia is the substrate. The allosteric effector GTP functions by stabilizing the protein conformation that binds the tetrahedral intermediate(s) formed during glutamine hydrolysis. Inhibited by the product CTP, via allosteric rather than competitive inhibition. In terms of biological role, catalyzes the ATP-dependent amination of UTP to CTP with either L-glutamine or ammonia as the source of nitrogen. Regulates intracellular CTP levels through interactions with the four ribonucleotide triphosphates. In Chlamydia trachomatis serovar L2 (strain ATCC VR-902B / DSM 19102 / 434/Bu), this protein is CTP synthase.